Consider the following 158-residue polypeptide: Low molecular weight phosphotyrosine protein phosphatase (158 aa).

Ala-2 is subject to N-acetylalanine. Residue Cys-13 is the Nucleophile of the active site. Arg-19 is an active-site residue. The Proton donor role is filled by Asp-130. Residues Tyr-132 and Tyr-133 each carry the phosphotyrosine modification.

It belongs to the low molecular weight phosphotyrosine protein phosphatase family.

It localises to the cytoplasm. It carries out the reaction O-phospho-L-tyrosyl-[protein] + H2O = L-tyrosyl-[protein] + phosphate. The enzyme catalyses a phosphate monoester + H2O = an alcohol + phosphate. Functionally, acts on tyrosine phosphorylated proteins, low-MW aryl phosphates and natural and synthetic acyl phosphates. In Gallus gallus (Chicken), this protein is Low molecular weight phosphotyrosine protein phosphatase (ACP1).